We begin with the raw amino-acid sequence, 383 residues long: Chitinase-3-like protein 1 (383 aa).

The signal sequence occupies residues 1–21 (MGVKASQTGFVVLVLLQCCSA). The 362-residue stretch at 22 to 383 (YKLVCYYTSW…NAIKDALAAT (362 aa)) folds into the GH18 domain. A disulfide bond links Cys-26 and Cys-51. N-linked (GlcNAc...) asparagine glycosylation is present at Asn-60. Chitin-binding positions include 70-71 (EW), 97-100 (GGWN), Tyr-141, 204-207 (MTYD), and Arg-263. An intrachain disulfide couples Cys-300 to Cys-364. An important for AKT1 activation and IL8 production region spans residues 324 to 338 (QWVGYDDQESVKSKV). Trp-352 is a binding site for chitin.

The protein belongs to the glycosyl hydrolase 18 family. Monomer. Glycosylated. Present in activated macrophages, articular chondrocytes, synovial cells as well as in liver. Very low or undetectable expression in non-inflammatory colon. Undetectable in muscle tissues, lung, pancreas, mononuclear cells, or fibroblasts.

The protein resides in the secreted. It is found in the extracellular space. The protein localises to the cytoplasm. It localises to the perinuclear region. Its subcellular location is the endoplasmic reticulum. Functionally, carbohydrate-binding lectin with a preference for chitin. Has no chitinase activity. May play a role in tissue remodeling and in the capacity of cells to respond to and cope with changes in their environment. Plays a role in T-helper cell type 2 (Th2) inflammatory response and IL-13-induced inflammation, regulating allergen sensitization, inflammatory cell apoptosis, dendritic cell accumulation and M2 macrophage differentiation. Facilitates invasion of pathogenic enteric bacteria into colonic mucosa and lymphoid organs. Mediates activation of AKT1 signaling pathway and subsequent IL8 production in colonic epithelial cells. Regulates antibacterial responses in lung by contributing to macrophage bacterial killing, controlling bacterial dissemination and augmenting host tolerance. Also regulates hyperoxia-induced injury, inflammation and epithelial apoptosis in lung. The sequence is that of Chitinase-3-like protein 1 (CHI3L1) from Homo sapiens (Human).